The primary structure comprises 318 residues: NADH-ubiquinone oxidoreductase chain 1 (318 aa).

8 consecutive transmembrane segments (helical) span residues 3–23, 69–89, 102–122, 144–164, 171–191, 222–242, 253–273, and 294–314; these read LINL…LTLL, MLFI…WTPL, MLFI…SGWA, VTLA…TLLS, YIWL…STLA, LFFL…IILF, ELYT…FLWI, and LPLT…LAGI.

It belongs to the complex I subunit 1 family. Core subunit of respiratory chain NADH dehydrogenase (Complex I) which is composed of 45 different subunits.

It is found in the mitochondrion inner membrane. It catalyses the reaction a ubiquinone + NADH + 5 H(+)(in) = a ubiquinol + NAD(+) + 4 H(+)(out). In terms of biological role, core subunit of the mitochondrial membrane respiratory chain NADH dehydrogenase (Complex I) which catalyzes electron transfer from NADH through the respiratory chain, using ubiquinone as an electron acceptor. Essential for the catalytic activity and assembly of complex I. The polypeptide is NADH-ubiquinone oxidoreductase chain 1 (MT-ND1) (Murina florium (Flores tube-nosed bat)).